Reading from the N-terminus, the 360-residue chain is Isopentenyl-diphosphate delta-isomerase (360 aa).

12–13 is a binding site for substrate; it reads RK. FMN contacts are provided by residues 69 to 71, serine 99, and asparagine 130; that span reads SMT. 99-101 lines the substrate pocket; the sequence is SQR. Residue glutamine 164 coordinates substrate. Glutamate 165 lines the Mg(2+) pocket. Residues lysine 196, threonine 226, 277–279, and 298–299 each bind FMN; these read GVR and AK.

This sequence belongs to the IPP isomerase type 2 family. Homooctamer. Dimer of tetramers. It depends on FMN as a cofactor. NADPH serves as cofactor. Mg(2+) is required as a cofactor.

Its subcellular location is the cytoplasm. The enzyme catalyses isopentenyl diphosphate = dimethylallyl diphosphate. Functionally, involved in the biosynthesis of isoprenoids. Catalyzes the 1,3-allylic rearrangement of the homoallylic substrate isopentenyl (IPP) to its allylic isomer, dimethylallyl diphosphate (DMAPP). In Halobacterium salinarum (strain ATCC 700922 / JCM 11081 / NRC-1) (Halobacterium halobium), this protein is Isopentenyl-diphosphate delta-isomerase.